A 372-amino-acid chain; its full sequence is Peptidyl-prolyl cis-trans isomerase D (372 aa).

The region spanning 14–178 is the PPIase cyclophilin-type domain; it reads YFDISIGGKS…KEALIVDCGE (165 aa). TPR repeat units follow at residues 219–252, 271–304, and 309–342; these read AKAS…INEE, FSLN…GGVK, and AKAF…APND.

Belongs to the cyclophilin-type PPIase family. PPIase D subfamily.

Its subcellular location is the cytoplasm. The catalysed reaction is [protein]-peptidylproline (omega=180) = [protein]-peptidylproline (omega=0). Its function is as follows. PPIases accelerate the folding of proteins. It catalyzes the cis-trans isomerization of proline imidic peptide bonds in oligopeptides. The protein is Peptidyl-prolyl cis-trans isomerase D (CPR6) of Gibberella zeae (strain ATCC MYA-4620 / CBS 123657 / FGSC 9075 / NRRL 31084 / PH-1) (Wheat head blight fungus).